A 392-amino-acid chain; its full sequence is O-phospho-L-seryl-tRNA:Cys-tRNA synthase (392 aa).

Pyridoxal 5'-phosphate is bound by residues 85–86 (AR), asparagine 190, and 213–215 (SGH). The residue at position 216 (lysine 216) is an N6-(pyridoxal phosphate)lysine.

It belongs to the SepCysS family. Homodimer. Interacts with SepRS. The cofactor is pyridoxal 5'-phosphate.

It catalyses the reaction O-phospho-L-seryl-tRNA(Cys) + hydrogen sulfide + H(+) = L-cysteinyl-tRNA(Cys) + phosphate. In terms of biological role, converts O-phospho-L-seryl-tRNA(Cys) (Sep-tRNA(Cys)) to L-cysteinyl-tRNA(Cys) (Cys-tRNA(Cys)). This chain is O-phospho-L-seryl-tRNA:Cys-tRNA synthase, found in Methanoculleus marisnigri (strain ATCC 35101 / DSM 1498 / JR1).